The sequence spans 141 residues: Holo-[acyl-carrier-protein] synthase (141 aa).

Aspartate 8 and glutamate 63 together coordinate Mg(2+).

It belongs to the P-Pant transferase superfamily. AcpS family. Requires Mg(2+) as cofactor.

It localises to the cytoplasm. The catalysed reaction is apo-[ACP] + CoA = holo-[ACP] + adenosine 3',5'-bisphosphate + H(+). Its function is as follows. Transfers the 4'-phosphopantetheine moiety from coenzyme A to a Ser of acyl-carrier-protein. This is Holo-[acyl-carrier-protein] synthase from Rhodospirillum centenum (strain ATCC 51521 / SW).